A 127-amino-acid polypeptide reads, in one-letter code: MSKAAIQFFRGVNEPVVPDIRLTRSRDGRTGQATFRFEQPAAIAPETMGDITGMWMVDEEGEMVTREVNGKFVNGTASALEAVYSWKSEQDFERFMRFAQRYADANGLGYSQSQDSDQTEGADNQQA.

Residues 108–127 (LGYSQSQDSDQTEGADNQQA) are disordered. The span at 109 to 127 (GYSQSQDSDQTEGADNQQA) shows a compositional bias: polar residues.

Belongs to the Psb28 family. Part of the photosystem II complex.

The protein resides in the cellular thylakoid membrane. The sequence is that of Photosystem II reaction center Psb28 protein from Synechococcus sp. (strain CC9605).